The sequence spans 89 residues: Small ribosomal subunit protein uS15 (89 aa).

It belongs to the universal ribosomal protein uS15 family. Part of the 30S ribosomal subunit. Forms a bridge to the 50S subunit in the 70S ribosome, contacting the 23S rRNA.

In terms of biological role, one of the primary rRNA binding proteins, it binds directly to 16S rRNA where it helps nucleate assembly of the platform of the 30S subunit by binding and bridging several RNA helices of the 16S rRNA. Forms an intersubunit bridge (bridge B4) with the 23S rRNA of the 50S subunit in the ribosome. This is Small ribosomal subunit protein uS15 from Aliivibrio salmonicida (strain LFI1238) (Vibrio salmonicida (strain LFI1238)).